A 751-amino-acid chain; its full sequence is MTITPPEQQVKRVRVAFVSNPVETSFEKWSRPGHFSRLLSKGPNTTTWIWNLHADAHDFDNHTTDLEDISRKVFSAHFGQLAIIEIWLSGMFFHGARFSNYEAWLLDPIHVKPSAQIVWPIVGQEILNGDVGGNFQGIQITSGLFQLWRSCGITSEFQLYITALTGLIFSAVLFFAGWFHYHKAAPKLEWFQNVESMLNHHLSGLLGLGCLSWAGHQIHVSLPINKLLDSGVNPAELPLPHDFILDKSLISQLYPSFSKGLAPFFTFHWSEYSDFLTFRGGLNNVTGGLWLTDVAHHHLALAVLFILAGHMYKTNWKIGHDIKGLLESHTGPFTGQGHKGLYEIFTNSWHAQLSLNLAMMGSLSIIVAQHMYSMPPYPYIAIDYGTELSLFTHHYWIGGFCIVGAAAHAAIFMVRDYDPALNFNNLLDRVLLHRDAIISHLNWVCIFLGLHSFGLYIHNDTLSALGRPQDMFSDSAIQLQPVFAQWIQNTHYLAPTLTAFNLVSPTTPVWGGDVVSISGKVAMMPIKLGTADFLVHHIHAFTIHVTVLILLKGVLFSRSSRLIPDKASLGFRFPCDGPGRGGTCQVSAWDHVFLGLFWMYNSISVAIFHFSWKMQSDVWGTVLANKVSHITGGNFSQGSLTINGWLRDFLWAQSSQVIQSYGSPLSAYGLMFLGAHFVWAFTLMFLFSGRGYWQELIESIVWAHNKLKVAPNIQPRALSITQGRAVGVAHYLLGGIATTWSFFLARIISVG.

Transmembrane regions (helical) follow at residues 73-96 (VFSA…FHGA), 159-182 (LYIT…FHYH), 198-222 (LNHH…HVSL), 294-312 (VAHH…GHMY), 349-372 (WHAQ…QHMY), 388-414 (LSLF…IFMV), 436-458 (AIIS…LYIH), and 533-551 (FLVH…LILL). [4Fe-4S] cluster-binding residues include C575 and C584. 2 consecutive transmembrane segments (helical) span residues 591–612 (HVFL…HFSW) and 665–687 (LSAY…MFLF). Residue H676 participates in chlorophyll a' binding. M684 and Y692 together coordinate chlorophyll a. W693 lines the phylloquinone pocket. The helical transmembrane segment at 725-745 (AVGVAHYLLGGIATTWSFFLA) threads the bilayer.

The protein belongs to the PsaA/PsaB family. The PsaA/B heterodimer binds the P700 chlorophyll special pair and subsequent electron acceptors. PSI consists of a core antenna complex that captures photons, and an electron transfer chain that converts photonic excitation into a charge separation. The eukaryotic PSI reaction center is composed of at least 11 subunits. P700 is a chlorophyll a/chlorophyll a' dimer, A0 is one or more chlorophyll a, A1 is one or both phylloquinones and FX is a shared 4Fe-4S iron-sulfur center. is required as a cofactor.

The protein localises to the plastid. It localises to the chloroplast thylakoid membrane. The catalysed reaction is reduced [plastocyanin] + hnu + oxidized [2Fe-2S]-[ferredoxin] = oxidized [plastocyanin] + reduced [2Fe-2S]-[ferredoxin]. In terms of biological role, psaA and PsaB bind P700, the primary electron donor of photosystem I (PSI), as well as the electron acceptors A0, A1 and FX. PSI is a plastocyanin/cytochrome c6-ferredoxin oxidoreductase, converting photonic excitation into a charge separation, which transfers an electron from the donor P700 chlorophyll pair to the spectroscopically characterized acceptors A0, A1, FX, FA and FB in turn. Oxidized P700 is reduced on the lumenal side of the thylakoid membrane by plastocyanin or cytochrome c6. This chain is Photosystem I P700 chlorophyll a apoprotein A1, found in Euglena gracilis.